Here is a 610-residue protein sequence, read N- to C-terminus: Serine/threonine-protein kinase RCK2 (610 aa).

Disordered stretches follow at residues 1–55 (MLKI…QDKN) and 99–127 (TSVPAIDVHESSEGQLSSDPLISDESLSE). Residues 11 to 24 (KKPDQADLSQESKK) are compositionally biased toward basic and acidic residues. A compositionally biased stretch (polar residues) spans 31-55 (RSSGTNNKDVSQITSSPKKSFQDKN). Ser46 and Ser50 each carry phosphoserine. Residues 163–478 (YKLINKIGEG…IDQFLDDPWL (316 aa)) enclose the Protein kinase domain. 169–177 (IGEGAFSKV) is a binding site for ATP. Ser187 carries the post-translational modification Phosphoserine. Residue Lys201 coordinates ATP. Residue Asp313 is the Proton acceptor of the active site. Thr350 is subject to Phosphothreonine. Positions 493 to 506 (KKAGTSERRHPHKK) are calmodulin-binding. Ser520 bears the Phosphoserine mark. The interval 541 to 564 (EDRMGTRGGLGSLAEDEELEDSYS) is disordered.

The protein belongs to the protein kinase superfamily. CAMK Ser/Thr protein kinase family. CaMK subfamily. In terms of processing, autophosphorylated. Phosphorylated by HOG1 at Ser-520 after osmotic stress.

The protein localises to the cytoplasm. The enzyme catalyses L-seryl-[protein] + ATP = O-phospho-L-seryl-[protein] + ADP + H(+). It carries out the reaction L-threonyl-[protein] + ATP = O-phospho-L-threonyl-[protein] + ADP + H(+). With respect to regulation, activated by Ser-520 phosphorylation by HOG1. Its function is as follows. Serine/threonine-protein kinase involved in a signal transduction pathway that is activated by changes in the osmolarity of the extracellular environment. This is Serine/threonine-protein kinase RCK2 (RCK2) from Saccharomyces cerevisiae (strain ATCC 204508 / S288c) (Baker's yeast).